Here is a 350-residue protein sequence, read N- to C-terminus: Heme A synthase (350 aa).

The next 8 membrane-spanning stretches (helical) occupy residues 14-34, 95-115, 125-145, 162-182, 202-222, 260-280, 296-316, and 317-337; these read VAIW…IGGF, YVHR…FIYF, VVIK…AGWY, LALH…QFFD, VGII…VAGL, VQFI…ILTV, IIQI…AIAI, and AHQV…CYLR. His264 contributes to the heme binding site. His318 contacts heme.

This sequence belongs to the COX15/CtaA family. Type 2 subfamily. In terms of assembly, interacts with CtaB. Heme b is required as a cofactor.

It is found in the cell membrane. It carries out the reaction Fe(II)-heme o + 2 A + H2O = Fe(II)-heme a + 2 AH2. The protein operates within porphyrin-containing compound metabolism; heme A biosynthesis; heme A from heme O: step 1/1. Catalyzes the conversion of heme O to heme A by two successive hydroxylations of the methyl group at C8. The first hydroxylation forms heme I, the second hydroxylation results in an unstable dihydroxymethyl group, which spontaneously dehydrates, resulting in the formyl group of heme A. This Wolbachia pipientis wMel protein is Heme A synthase.